The sequence spans 287 residues: MYSIYSGGFSLVRSLLKKYNIKGGTFDQHFLVDAGYLDRIVAAAELGPKDVVLEIGAGVGNLTERLAKKVKKVIAIELDPVLVRVLHDRFDKVGNIEIIAGDALKVEFPEFDKIVSNLPYSISSEITFKLLRHKFKLGILMYQYEFAARMVSQPNCKDYSRLTVDTCYFADASILMKVPKSAFQPAPEVDSAVIKLVPRPVPFEVKDQAFFMNFVSAVFSQRRKKLRNAILNTNYLLKIPNIKEVISRLPEDMMSKRAENLTPEELAQVANHIIDLKTSILANELNE.

Histidine 29, leucine 31, glycine 56, glutamate 77, aspartate 102, and asparagine 117 together coordinate S-adenosyl-L-methionine.

It belongs to the class I-like SAM-binding methyltransferase superfamily. rRNA adenine N(6)-methyltransferase family. RsmA subfamily.

The protein resides in the cytoplasm. Specifically dimethylates two adjacent adenosines in the loop of a conserved hairpin near the 3'-end of 16S rRNA in the 30S particle. May play a critical role in biogenesis of 30S subunits. The sequence is that of Probable ribosomal RNA small subunit methyltransferase A from Methanosarcina barkeri (strain Fusaro / DSM 804).